A 546-amino-acid chain; its full sequence is (-)-5-epieremophilene synthase STPS2 (546 aa).

Residues Asp-299, Asp-303, Asp-442, Thr-446, and Glu-450 each coordinate Mg(2+). The DDXXD motif signature appears at 299-303 (DDTYD).

This sequence belongs to the terpene synthase family. Tpsa subfamily. In terms of assembly, monomer. Requires Mg(2+) as cofactor. As to expression, highly expressed in leaves. Expressed at levels in flowers.

It carries out the reaction (2E,6E)-farnesyl diphosphate = (-)-5-epi-eremophilene + diphosphate. It functions in the pathway secondary metabolite biosynthesis; terpenoid biosynthesis. In terms of biological role, sesquiterpene synthase that catalyzes the conversion of farnesyl diphosphate to (-)-5-epi-eremophilene. This Salvia miltiorrhiza (Chinese sage) protein is (-)-5-epieremophilene synthase STPS2.